We begin with the raw amino-acid sequence, 347 residues long: D-fructose 1,6-bisphosphatase class 2/sedoheptulose 1,7-bisphosphatase (347 aa).

Positions 33, 57, 97, and 100 each coordinate Mn(2+). Substrate contacts are provided by residues 100-102, Tyr-131, 176-178, and 198-200; these read EGT, RKR, and DGD. Glu-225 contacts Mn(2+).

The protein belongs to the FBPase class 2 family. As to quaternary structure, homotetramer. It depends on Mn(2+) as a cofactor.

It carries out the reaction beta-D-fructose 1,6-bisphosphate + H2O = beta-D-fructose 6-phosphate + phosphate. It catalyses the reaction D-sedoheptulose 1,7-bisphosphate + H2O = D-sedoheptulose 7-phosphate + phosphate. Its pathway is carbohydrate biosynthesis; Calvin cycle. Catalyzes the hydrolysis of fructose 1,6-bisphosphate (Fru 1,6-P2) and sedoheptulose 1,7-bisphosphate (Sed 1,7-P2) to fructose 6-phosphate and sedoheptulose 7-phosphate, respectively. The sequence is that of D-fructose 1,6-bisphosphatase class 2/sedoheptulose 1,7-bisphosphatase from Synechococcus sp. (strain JA-2-3B'a(2-13)) (Cyanobacteria bacterium Yellowstone B-Prime).